Consider the following 254-residue polypeptide: Glycerol operon regulatory protein (254 aa).

The HTH iclR-type domain occupies 5-67 (IQSLERAAAM…DASGRYQLGA (63 aa)). A DNA-binding region (H-T-H motif) is located at residues 27–46 (LSDIASSLGLAKGTAHGILR). An IclR-ED domain is found at 82–251 (LRARALVWTD…ARAVSRDLGA (170 aa)).

May be an activator protein for the gylABX operon. This chain is Glycerol operon regulatory protein (gylR), found in Streptomyces coelicolor (strain ATCC BAA-471 / A3(2) / M145).